An 878-amino-acid chain; its full sequence is Calcium-transporting ATPase 1 (878 aa).

The next 4 membrane-spanning stretches (helical) occupy residues 50–72, 76–95, 243–263, and 281–301; these read LFID…VQLF, FVES…VAVV, LGWV…LRLF, and FAVA…VTIV. 4 residues coordinate Ca(2+): valine 287, alanine 288, isoleucine 290, and glutamate 292. The 4-aspartylphosphate intermediate role is filled by aspartate 334. The next 6 helical transmembrane spans lie at 681 to 701, 704 to 724, 753 to 773, 779 to 799, 816 to 836, and 845 to 865; these read LFSG…VGWV, FTAL…AIAL, VILI…YVGQ, MGVA…TFAA, YVLM…LPFL, and AFGW…VICM. Positions 713 and 717 each coordinate Ca(2+).

This sequence belongs to the cation transport ATPase (P-type) (TC 3.A.3) family. Type IIA subfamily.

The protein resides in the cell membrane. It carries out the reaction Ca(2+)(in) + ATP + H2O = Ca(2+)(out) + ADP + phosphate + H(+). Its activity is regulated as follows. Inhibited by very high concentrations of cyclopiazonic acid (CPA). Its function is as follows. Catalyzes the hydrolysis of ATP coupled with the transport of calcium. The protein is Calcium-transporting ATPase 1 (yoaB) of Lactococcus lactis subsp. lactis (strain IL1403) (Streptococcus lactis).